Consider the following 85-residue polypeptide: MAHKKGQGSTQNNRDSAGRRLGVKKYGGEVVIPGNIIIRQRGTKIHPGKNVGMGKDHTIFALVAGVVTFHRKDKKRQQVSIVPAA.

The tract at residues 1–22 (MAHKKGQGSTQNNRDSAGRRLG) is disordered.

Belongs to the bacterial ribosomal protein bL27 family.

This is Large ribosomal subunit protein bL27 from Sulfurimonas denitrificans (strain ATCC 33889 / DSM 1251) (Thiomicrospira denitrificans (strain ATCC 33889 / DSM 1251)).